The chain runs to 190 residues: MNNYIFIISAPSGAGKSSLLKAFLATDIGKDNYAVAISHTTREPRVGEINSREYYFVTVAEFEQLLSQDGFIEYAKVFKNYYGTSKAELDRLLALGKNIILEINWQGAQQTRAIYGDRAKSIFILPPSLDELRKRLEKRNTDSKETIDYRMEQVQSEISHADEYDYLLVNDDFSQSLEQLCKYFEQNIQS.

The region spanning 3-185 (NYIFIISAPS…SLEQLCKYFE (183 aa)) is the Guanylate kinase-like domain. Position 10 to 17 (10 to 17 (APSGAGKS)) interacts with ATP.

This sequence belongs to the guanylate kinase family.

The protein resides in the cytoplasm. It catalyses the reaction GMP + ATP = GDP + ADP. Functionally, essential for recycling GMP and indirectly, cGMP. In Francisella tularensis subsp. holarctica (strain OSU18), this protein is Guanylate kinase.